We begin with the raw amino-acid sequence, 552 residues long: Nucleoside-diphosphatase mig-23 (552 aa).

Topologically, residues M1–R6 are cytoplasmic. The chain crosses the membrane as a helical span at residues F7–V27. Residues E28–E489 lie on the Lumenal side of the membrane. Residue E174 is the Proton acceptor of the active site. N-linked (GlcNAc...) asparagine glycosylation is found at N190 and N284. The helical transmembrane segment at S490–A510 threads the bilayer. Topologically, residues K511–A552 are cytoplasmic.

This sequence belongs to the GDA1/CD39 NTPase family. In terms of tissue distribution, expressed in body wall muscles.

It is found in the golgi apparatus membrane. It carries out the reaction a ribonucleoside 5'-diphosphate + H2O = a ribonucleoside 5'-phosphate + phosphate + H(+). Functionally, seems to be able to hydrolyze ADP, UDP and GDP. Supports mig-17 glycosylation and surface expression, which is required for proper migration of distal tip cells during gonad morphogenesis. The polypeptide is Nucleoside-diphosphatase mig-23 (mig-23) (Caenorhabditis elegans).